Reading from the N-terminus, the 308-residue chain is N-acetylmuramic acid 6-phosphate etherase (308 aa).

In terms of domain architecture, SIS spans 62 to 225 (TAARLRQGGR…STGVMVQLGK (164 aa)). E90 functions as the Proton donor in the catalytic mechanism. Residue E121 is part of the active site.

It belongs to the GCKR-like family. MurNAc-6-P etherase subfamily. In terms of assembly, homodimer.

The enzyme catalyses N-acetyl-D-muramate 6-phosphate + H2O = N-acetyl-D-glucosamine 6-phosphate + (R)-lactate. It participates in amino-sugar metabolism; N-acetylmuramate degradation. Functionally, specifically catalyzes the cleavage of the D-lactyl ether substituent of MurNAc 6-phosphate, producing GlcNAc 6-phosphate and D-lactate. The sequence is that of N-acetylmuramic acid 6-phosphate etherase from Thermosynechococcus vestitus (strain NIES-2133 / IAM M-273 / BP-1).